The sequence spans 179 residues: Ribosome maturation factor RimM (179 aa).

Residues 95–174 (KDEFFYFDIL…QIFCTQDAFL (80 aa)) enclose the PRC barrel domain.

Belongs to the RimM family. Binds ribosomal protein uS19.

Its subcellular location is the cytoplasm. An accessory protein needed during the final step in the assembly of 30S ribosomal subunit, possibly for assembly of the head region. Essential for efficient processing of 16S rRNA. May be needed both before and after RbfA during the maturation of 16S rRNA. It has affinity for free ribosomal 30S subunits but not for 70S ribosomes. This is Ribosome maturation factor RimM from Campylobacter jejuni subsp. jejuni serotype O:6 (strain 81116 / NCTC 11828).